Here is a 296-residue protein sequence, read N- to C-terminus: Circadian clock oscillator protein KaiA (296 aa).

Residues 2 to 133 (ARPGLTIALL…LRQGRADGRS (132 aa)) form a psR domain, binds oxidized quinones region. A KaiA N-terminal domain is found at 2 to 152 (ARPGLTIALL…KLSRRLQERL (151 aa)). Positions 153-161 (GYLGVFYKR) are flexible linker. The KaiA C-terminal domain maps to 162-270 (DPSRFLGSLP…CEMYRRSIPP (109 aa)).

As to quaternary structure, homodimer. The KaiABC complex composition changes during the circadian cycle to control KaiC phosphorylation. Complexes KaiC(6), KaiA(2-4):KaiC(6), KaiB(6):KaiC(6) and KaiC(6):KaiB(6):KaiA(12) are among the most important forms, many form cooperatively. KaiA and CikA bind to the same region of the KaiB(fs) form and therefore compete.

In terms of biological role, key component of the KaiABC oscillator complex, which constitutes the main circadian regulator in cyanobacteria. Complex composition changes during the circadian cycle to control KaiC phosphorylation. KaiA stimulates KaiC autophosphorylation, while KaiB sequesters KaiA, leading to KaiC autodephosphorylation. KaiA binding to the KaiC CII domain during the subjective day yields KaiA(2-4):KaiC(6) complexes which stimulate KaiC autophosphorylation. Phospho-Ser-431 KaiC accumulation triggers binding of KaiB during the subjective night to form the KaiB(6):KaiC(6) complex, leading to changes in the output regulators CikA and SasA. KaiB(6):KaiC(6) formation exposes a site for KaiA binding on KaiB that sequesters KaiA from KaiC's CII domain, making the KaiC(6):KaiB(6):KaiA(12) complex resulting in KaiC autodephosphorylation. Complete dephosphorylation of KaiC leads to dissociation of KaiA(2):KaiB(1), completing 1 cycle of the Kai oscillator. Its function is as follows. Binds oxidized quinones via the N-terminal PsR domain, allowing it to sense redox changes and possibly mediate clock input. This Parasynechococcus marenigrum (strain WH8102) protein is Circadian clock oscillator protein KaiA.